Consider the following 337-residue polypeptide: Anthranilate phosphoribosyltransferase (337 aa).

Residues G80, 83–84, T88, 90–93, 108–116, and S120 contribute to the 5-phospho-alpha-D-ribose 1-diphosphate site; these read GD, NIST, and KHGNRAVSS. Anthranilate is bound at residue G80. S92 is a binding site for Mg(2+). N111 is an anthranilate binding site. Residue R166 coordinates anthranilate. Mg(2+) contacts are provided by D224 and E225.

Belongs to the anthranilate phosphoribosyltransferase family. Homodimer. It depends on Mg(2+) as a cofactor.

It catalyses the reaction N-(5-phospho-beta-D-ribosyl)anthranilate + diphosphate = 5-phospho-alpha-D-ribose 1-diphosphate + anthranilate. It functions in the pathway amino-acid biosynthesis; L-tryptophan biosynthesis; L-tryptophan from chorismate: step 2/5. Its function is as follows. Catalyzes the transfer of the phosphoribosyl group of 5-phosphorylribose-1-pyrophosphate (PRPP) to anthranilate to yield N-(5'-phosphoribosyl)-anthranilate (PRA). This chain is Anthranilate phosphoribosyltransferase, found in Anaeromyxobacter dehalogenans (strain 2CP-C).